A 265-amino-acid chain; its full sequence is Indole-3-glycerol phosphate synthase (265 aa).

This sequence belongs to the TrpC family.

The enzyme catalyses 1-(2-carboxyphenylamino)-1-deoxy-D-ribulose 5-phosphate + H(+) = (1S,2R)-1-C-(indol-3-yl)glycerol 3-phosphate + CO2 + H2O. The protein operates within amino-acid biosynthesis; L-tryptophan biosynthesis; L-tryptophan from chorismate: step 4/5. The chain is Indole-3-glycerol phosphate synthase from Chromobacterium violaceum (strain ATCC 12472 / DSM 30191 / JCM 1249 / CCUG 213 / NBRC 12614 / NCIMB 9131 / NCTC 9757 / MK).